We begin with the raw amino-acid sequence, 133 residues long: Ribonuclease VapC17 (133 aa).

Residues aspartate 7 and aspartate 93 each coordinate Mg(2+). Residues alanine 30–alanine 118 form the PINc domain.

This sequence belongs to the PINc/VapC protein family. The cofactor is Mg(2+).

Toxic component of a type II toxin-antitoxin (TA) system. An RNase. The cognate antitoxin is VapB17. This is Ribonuclease VapC17 from Mycobacterium tuberculosis (strain CDC 1551 / Oshkosh).